We begin with the raw amino-acid sequence, 509 residues long: Maturase K (509 aa).

The protein belongs to the intron maturase 2 family. MatK subfamily.

It is found in the plastid. The protein localises to the chloroplast. Its function is as follows. Usually encoded in the trnK tRNA gene intron. Probably assists in splicing its own and other chloroplast group II introns. The sequence is that of Maturase K from Nicotiana rustica (Aztec tobacco).